Reading from the N-terminus, the 163-residue chain is Shikimate kinase (163 aa).

10-15 (GVGKTT) is an ATP binding site. Position 14 (T14) interacts with Mg(2+). Positions 28, 52, and 75 each coordinate substrate. R116 serves as a coordination point for ATP. R134 is a substrate binding site. R151 is a binding site for ATP.

This sequence belongs to the shikimate kinase family. In terms of assembly, monomer. Mg(2+) serves as cofactor.

It localises to the cytoplasm. The enzyme catalyses shikimate + ATP = 3-phosphoshikimate + ADP + H(+). It participates in metabolic intermediate biosynthesis; chorismate biosynthesis; chorismate from D-erythrose 4-phosphate and phosphoenolpyruvate: step 5/7. Functionally, catalyzes the specific phosphorylation of the 3-hydroxyl group of shikimic acid using ATP as a cosubstrate. The chain is Shikimate kinase from Streptococcus pyogenes serotype M12 (strain MGAS2096).